Reading from the N-terminus, the 142-residue chain is Large ribosomal subunit protein uL11 (142 aa).

It belongs to the universal ribosomal protein uL11 family. Part of the ribosomal stalk of the 50S ribosomal subunit. Interacts with L10 and the large rRNA to form the base of the stalk. L10 forms an elongated spine to which L12 dimers bind in a sequential fashion forming a multimeric L10(L12)X complex. In terms of processing, one or more lysine residues are methylated.

Functionally, forms part of the ribosomal stalk which helps the ribosome interact with GTP-bound translation factors. The protein is Large ribosomal subunit protein uL11 of Vibrio vulnificus (strain CMCP6).